A 620-amino-acid chain; its full sequence is Carotenoid isomerooxygenase (620 aa).

Fe cation-binding residues include histidine 211, histidine 267, and histidine 337. Positions asparagine 440–arginine 459 are disordered. Basic and acidic residues predominate over residues glutamate 449–arginine 459. Residue histidine 612 coordinates Fe cation.

The protein belongs to the carotenoid oxygenase family. Requires Fe(2+) as cofactor. Expression follows organogenesis of the larval Bolwig's organ (BO), which mediates larval photophobic behavior. In the adult, expression is restricted exclusively to the brain. Expressed in both neuronal cells and glia cells. Not active within photoreceptors. Active within neuronal cells within the central nervous system.

The catalysed reaction is all-trans-zeaxanthin + O2 = (3R)-11-cis-3-hydroxyretinal + (3R)-all-trans-3-hydroxyretinal. The protein operates within cofactor metabolism; retinol metabolism. Catalyzes the oxidative cleavage at the 15,15'-double bond of carotenoids and the simultaneous all-trans to 11-cis isomerization of one cleavage product. Carotenoids like 11-cis retinal can promote visual pigment biogenesis in the dark. Essential for the biosynthesis of the 3-hydroxyretinal chromophore of rhodopsin from zeaxanthin and for proper photoreceptor development. Also essential for larval light perception. The polypeptide is Carotenoid isomerooxygenase (ninaB) (Drosophila melanogaster (Fruit fly)).